The sequence spans 253 residues: Isoprenyl transferase (253 aa).

Residue aspartate 30 is part of the active site. Aspartate 30 contributes to the Mg(2+) binding site. Substrate contacts are provided by residues 31-34, tryptophan 35, histidine 51, and 79-81; these read GNRR and STE. Residue asparagine 82 is the Proton acceptor of the active site. Substrate-binding positions include phenylalanine 83, arginine 85, arginine 202, and 208–210; that span reads RVS. Residue glutamate 221 participates in Mg(2+) binding.

Belongs to the UPP synthase family. In terms of assembly, homodimer. Mg(2+) is required as a cofactor.

In terms of biological role, catalyzes the condensation of isopentenyl diphosphate (IPP) with allylic pyrophosphates generating different type of terpenoids. The polypeptide is Isoprenyl transferase (Chlamydia trachomatis serovar D (strain ATCC VR-885 / DSM 19411 / UW-3/Cx)).